The primary structure comprises 303 residues: Nucleotide-binding protein SAR0820 (303 aa).

18-25 (GLSGAGKS) is an ATP binding site. A GTP-binding site is contributed by 69–72 (DLRG).

Belongs to the RapZ-like family.

In terms of biological role, displays ATPase and GTPase activities. In Staphylococcus aureus (strain MRSA252), this protein is Nucleotide-binding protein SAR0820.